We begin with the raw amino-acid sequence, 128 residues long: Myelin basic protein (128 aa).

Disordered stretches follow at residues 1-24 and 82-128; these read AGGAHFFGQEGSRKVPEKGKEPAT and TDGQ…PARR. 2 stretches are compositionally biased toward basic and acidic residues: residues 11–23 and 96–107; these read GSRKVPEKGKEPA and KSREAYRGRKDG.

Belongs to the myelin basic protein family. The N-terminus is blocked.

The protein resides in the myelin membrane. In terms of biological role, this protein may function to maintain proper structure of myelin. The sequence is that of Myelin basic protein (MBP) from Carcharhinus obscurus (Dusky shark).